A 32-amino-acid polypeptide reads, in one-letter code: Potassium channel toxin alpha-KTx 10.2 (32 aa).

Disulfide bonds link C3–C22, C8–C12, and C27–C29. Tyrosine amide is present on Y32.

It belongs to the short scorpion toxin superfamily. Potassium channel inhibitor family. Alpha-KTx 10 subfamily. As to expression, expressed by the venom gland.

The protein resides in the secreted. Functionally, blocks Shaker B potassium-channels (Kv1.1/KCNA1 sub-family). This Centruroides noxius (Mexican scorpion) protein is Potassium channel toxin alpha-KTx 10.2.